Consider the following 395-residue polypeptide: Elongation factor Tu (395 aa).

Residues 10–204 (KEHANIGTIG…AVDDYIPTPE (195 aa)) form the tr-type G domain. The interval 19–26 (GHVDHGKT) is G1. 19–26 (GHVDHGKT) contributes to the GTP binding site. Position 26 (Thr26) interacts with Mg(2+). Residues 60–64 (GITIN) form a G2 region. Positions 81–84 (DCPG) are G3. Residues 81 to 85 (DCPGH) and 136 to 139 (NKAD) each bind GTP. A G4 region spans residues 136–139 (NKAD). The interval 174–176 (SAL) is G5.

The protein belongs to the TRAFAC class translation factor GTPase superfamily. Classic translation factor GTPase family. EF-Tu/EF-1A subfamily. As to quaternary structure, monomer.

It localises to the cytoplasm. It catalyses the reaction GTP + H2O = GDP + phosphate + H(+). Its function is as follows. GTP hydrolase that promotes the GTP-dependent binding of aminoacyl-tRNA to the A-site of ribosomes during protein biosynthesis. The polypeptide is Elongation factor Tu (Staphylococcus carnosus (strain TM300)).